The following is a 647-amino-acid chain: Probable inactive receptor kinase RLK902 (647 aa).

The N-terminal stretch at 1-29 (MRLFFTPSMSNLSIFFSILLLSLPLPSIG) is a signal peptide. LRR repeat units lie at residues 69–93 (GGRV…IFGN), 94–118 (LTQL…LGSC), 119–142 (SDLR…LFSL), 144–165 (NLVR…GFKN), and 166–192 (LTRL…SLDQ). Residues 268–288 (GIVIGCVVGLSLIVMILMVLF) form a helical membrane-spanning segment. In terms of domain architecture, Protein kinase spans 365-639 (RASAEVLGKG…EVVRRIQELR (275 aa)). Serine 367 carries the post-translational modification Phosphoserine. 371 to 379 (LGKGTFGTA) is a binding site for ATP. Threonine 388 carries the phosphothreonine modification. Lysine 393 lines the ATP pocket. Serine 444 carries the phosphoserine modification. At threonine 520 the chain carries Phosphothreonine. At serine 540 the chain carries Phosphoserine. A Phosphothreonine modification is found at threonine 618.

Belongs to the protein kinase superfamily. Ser/Thr protein kinase family. Interacts with At3g17950, At3g27210 and At5g05190. In terms of processing, autophosphorylation. In terms of tissue distribution, expressed in root tips, lateral root primordia, stipules, and floral organ abscission zones.

The protein localises to the cell membrane. This is Probable inactive receptor kinase RLK902 (RLK902) from Arabidopsis thaliana (Mouse-ear cress).